The sequence spans 432 residues: GRAM domain-containing protein 2B (432 aa).

M1 is subject to N-acetylmethionine. Disordered stretches follow at residues 1 to 61 (MTEL…SPDQ) and 74 to 106 (DGAS…SSQY). Basic and acidic residues-rich tracts occupy residues 9-39 (EDTK…EEKK) and 81-99 (DKND…ERKK). The region spanning 110-177 (MHFHKLFLSV…FSVTLIKKTK (68 aa)) is the GRAM domain. Residues 220-233 (TSVGNSPNPSSAEN) are compositionally biased toward polar residues. The disordered stretch occupies residues 220–239 (TSVGNSPNPSSAENSFRADR). Phosphoserine occurs at positions 225, 242, and 252. The disordered stretch occupies residues 262 to 285 (RQDMEGYSSSGSQTPESENSRDFH). Positions 268–278 (YSSSGSQTPES) are enriched in polar residues.

This is GRAM domain-containing protein 2B (GRAMD2B) from Homo sapiens (Human).